We begin with the raw amino-acid sequence, 27 residues long: Pyruvate dehydrogenase protein X component, mitochondrial (27 aa).

The interval 1 to 27 (FRLSPAARNILEKHSLDASQGTATGPR) is disordered. The region spanning 2 to 27 (RLSPAARNILEKHSLDASQGTATGPR) is the Peripheral subunit-binding (PSBD) domain. K13 is modified (N6-acetyllysine). S15 is subject to Phosphoserine. The segment covering 17 to 27 (DASQGTATGPR) has biased composition (polar residues).

This sequence belongs to the 2-oxoacid dehydrogenase family. Part of the inner core of the multimeric pyruvate dehydrogenase complex that is composed of about 48 DLAT and 12 PDHX molecules. This core binds multiple copies of pyruvate dehydrogenase (subunits PDH1A and PDHB, E1), dihydrolipoamide acetyltransferase (DLAT, E2) and lipoamide dehydrogenase (DLD, E3). Interacts with SIRT4. Interacts with DLD.

It is found in the mitochondrion matrix. Its function is as follows. Required for anchoring dihydrolipoamide dehydrogenase (E3) to the dihydrolipoamide transacetylase (E2) core of the pyruvate dehydrogenase complexes of eukaryotes. This specific binding is essential for a functional PDH complex. The sequence is that of Pyruvate dehydrogenase protein X component, mitochondrial from Mesocricetus auratus (Golden hamster).